Consider the following 459-residue polypeptide: Bifunctional protein GlmU (459 aa).

The pyrophosphorylase stretch occupies residues 1–230 (MSNRFAVILA…FDETLGVNDR (230 aa)). UDP-N-acetyl-alpha-D-glucosamine is bound by residues 9–12 (LAAG), lysine 23, glutamine 73, and 78–79 (GT). Mg(2+) is bound at residue aspartate 103. UDP-N-acetyl-alpha-D-glucosamine contacts are provided by glycine 140, glutamate 155, asparagine 170, and asparagine 228. Position 228 (asparagine 228) interacts with Mg(2+). A linker region spans residues 231-251 (VALSQAEIIMKNRINRKNMVN). The tract at residues 252-459 (GVTIIDPSNT…VDQLLNKKKS (208 aa)) is N-acetyltransferase. Residues arginine 333 and lysine 351 each coordinate UDP-N-acetyl-alpha-D-glucosamine. The Proton acceptor role is filled by histidine 363. UDP-N-acetyl-alpha-D-glucosamine-binding residues include tyrosine 366 and asparagine 377. Acetyl-CoA contacts are provided by residues 386 to 387 (NY), alanine 423, and arginine 440.

The protein in the N-terminal section; belongs to the N-acetylglucosamine-1-phosphate uridyltransferase family. It in the C-terminal section; belongs to the transferase hexapeptide repeat family. In terms of assembly, homotrimer. It depends on Mg(2+) as a cofactor.

It is found in the cytoplasm. The enzyme catalyses alpha-D-glucosamine 1-phosphate + acetyl-CoA = N-acetyl-alpha-D-glucosamine 1-phosphate + CoA + H(+). It carries out the reaction N-acetyl-alpha-D-glucosamine 1-phosphate + UTP + H(+) = UDP-N-acetyl-alpha-D-glucosamine + diphosphate. The protein operates within nucleotide-sugar biosynthesis; UDP-N-acetyl-alpha-D-glucosamine biosynthesis; N-acetyl-alpha-D-glucosamine 1-phosphate from alpha-D-glucosamine 6-phosphate (route II): step 2/2. It participates in nucleotide-sugar biosynthesis; UDP-N-acetyl-alpha-D-glucosamine biosynthesis; UDP-N-acetyl-alpha-D-glucosamine from N-acetyl-alpha-D-glucosamine 1-phosphate: step 1/1. Its pathway is bacterial outer membrane biogenesis; LPS lipid A biosynthesis. In terms of biological role, catalyzes the last two sequential reactions in the de novo biosynthetic pathway for UDP-N-acetylglucosamine (UDP-GlcNAc). The C-terminal domain catalyzes the transfer of acetyl group from acetyl coenzyme A to glucosamine-1-phosphate (GlcN-1-P) to produce N-acetylglucosamine-1-phosphate (GlcNAc-1-P), which is converted into UDP-GlcNAc by the transfer of uridine 5-monophosphate (from uridine 5-triphosphate), a reaction catalyzed by the N-terminal domain. This chain is Bifunctional protein GlmU, found in Bacillus cereus (strain ATCC 14579 / DSM 31 / CCUG 7414 / JCM 2152 / NBRC 15305 / NCIMB 9373 / NCTC 2599 / NRRL B-3711).